Here is a 529-residue protein sequence, read N- to C-terminus: Bifunctional purine biosynthesis protein PurH (529 aa).

The region spanning 1-148 (MQQRRPVRRA…KNHRDVAIVV (148 aa)) is the MGS-like domain. Lys-287 is subject to N6-acetyllysine.

Belongs to the PurH family.

It carries out the reaction (6R)-10-formyltetrahydrofolate + 5-amino-1-(5-phospho-beta-D-ribosyl)imidazole-4-carboxamide = 5-formamido-1-(5-phospho-D-ribosyl)imidazole-4-carboxamide + (6S)-5,6,7,8-tetrahydrofolate. The catalysed reaction is IMP + H2O = 5-formamido-1-(5-phospho-D-ribosyl)imidazole-4-carboxamide. It participates in purine metabolism; IMP biosynthesis via de novo pathway; 5-formamido-1-(5-phospho-D-ribosyl)imidazole-4-carboxamide from 5-amino-1-(5-phospho-D-ribosyl)imidazole-4-carboxamide (10-formyl THF route): step 1/1. It functions in the pathway purine metabolism; IMP biosynthesis via de novo pathway; IMP from 5-formamido-1-(5-phospho-D-ribosyl)imidazole-4-carboxamide: step 1/1. This chain is Bifunctional purine biosynthesis protein PurH, found in Escherichia coli O6:K15:H31 (strain 536 / UPEC).